Here is a 77-residue protein sequence, read N- to C-terminus: Omega-conotoxin-like SO-5 (77 aa).

The N-terminal stretch at 1–22 (MKLTCVMIVAVLLLTACQLITA) is a signal peptide. A propeptide spanning residues 23–42 (DDSRGTQKHRSLRSTTKVSK) is cleaved from the precursor. Cystine bridges form between C46–C61, C53–C64, and C60–C71.

The protein belongs to the conotoxin O1 superfamily. In terms of tissue distribution, expressed by the venom duct.

It is found in the secreted. Its function is as follows. Omega-conotoxins act at presynaptic membranes, they bind and block voltage-gated calcium channels (Cav). This Conus striatus (Striated cone) protein is Omega-conotoxin-like SO-5 (SO5).